Consider the following 105-residue polypeptide: Small cysteine and glycine repeat-containing protein 6 (105 aa).

The interval 4-83 is 13 X 2 AA repeats of CG; that stretch reads CGCGGCGGGC…HSCGCGCGCG (80 aa).

This sequence belongs to the KRTAP type 28 family.

Functionally, in the hair cortex, hair keratin intermediate filaments are embedded in an interfilamentous matrix, consisting of hair keratin-associated proteins (KRTAP), which are essential for the formation of a rigid and resistant hair shaft through their extensive disulfide bond cross-linking with abundant cysteine residues of hair keratins. The matrix proteins include the high-sulfur and high-glycine-tyrosine keratins. This is Small cysteine and glycine repeat-containing protein 6 from Homo sapiens (Human).